Consider the following 41-residue polypeptide: Photosystem I reaction center subunit IX (41 aa).

The helical transmembrane segment at Tyr7–Ile27 threads the bilayer.

The protein belongs to the PsaJ family.

It is found in the plastid. The protein resides in the chloroplast thylakoid membrane. May help in the organization of the PsaE and PsaF subunits. This is Photosystem I reaction center subunit IX from Stigeoclonium helveticum (Green alga).